We begin with the raw amino-acid sequence, 419 residues long: Tyrosine--tRNA ligase (419 aa).

L-tyrosine is bound at residue Tyr-42. Positions 47 to 56 (ATAPSLHVGS) match the 'HIGH' region motif. L-tyrosine is bound by residues Tyr-179 and Gln-183. The 'KMSKS' region motif lies at 239 to 243 (KMGKT). Lys-242 provides a ligand contact to ATP. An S4 RNA-binding domain is found at 353-418 (VVLAALFADA…GKKKIVLVKP (66 aa)).

It belongs to the class-I aminoacyl-tRNA synthetase family. TyrS type 1 subfamily. As to quaternary structure, homodimer.

The protein resides in the cytoplasm. It carries out the reaction tRNA(Tyr) + L-tyrosine + ATP = L-tyrosyl-tRNA(Tyr) + AMP + diphosphate + H(+). In terms of biological role, catalyzes the attachment of tyrosine to tRNA(Tyr) in a two-step reaction: tyrosine is first activated by ATP to form Tyr-AMP and then transferred to the acceptor end of tRNA(Tyr). The protein is Tyrosine--tRNA ligase of Caulobacter vibrioides (strain ATCC 19089 / CIP 103742 / CB 15) (Caulobacter crescentus).